The primary structure comprises 122 residues: MAAVLVGSEVSVAGKLSKVTVDVDASKKFSWAEGKGSLVWKINDSDLALRSTNAGIEVKLTPKKGTTTSGIVLDLEGAKLTLSCGYKSVVVLFELGETPEGRGFSEMRSLSASNLSLLRMAN.

The chain is Protein 6 (6) from Hordeum vulgare (Barley).